A 447-amino-acid chain; its full sequence is Tubulin beta chain (447 aa).

8 residues coordinate GTP: Gln11, Glu69, Ser138, Gly142, Thr143, Gly144, Asn204, and Asn226. Glu69 is a Mg(2+) binding site. Residues 424–447 (QYQEASVSEGEEEYDEEAPLEGEE) form a disordered region. Positions 432–447 (EGEEEYDEEAPLEGEE) are enriched in acidic residues.

It belongs to the tubulin family. As to quaternary structure, dimer of alpha and beta chains. A typical microtubule is a hollow water-filled tube with an outer diameter of 25 nm and an inner diameter of 15 nM. Alpha-beta heterodimers associate head-to-tail to form protofilaments running lengthwise along the microtubule wall with the beta-tubulin subunit facing the microtubule plus end conferring a structural polarity. Microtubules usually have 13 protofilaments but different protofilament numbers can be found in some organisms and specialized cells. The cofactor is Mg(2+).

Its subcellular location is the cytoplasm. It localises to the cytoskeleton. In terms of biological role, tubulin is the major constituent of microtubules, a cylinder consisting of laterally associated linear protofilaments composed of alpha- and beta-tubulin heterodimers. Microtubules grow by the addition of GTP-tubulin dimers to the microtubule end, where a stabilizing cap forms. Below the cap, tubulin dimers are in GDP-bound state, owing to GTPase activity of alpha-tubulin. This chain is Tubulin beta chain (TUB1), found in Cercospora beticola (Sugarbeet leaf spot fungus).